Here is a 500-residue protein sequence, read N- to C-terminus: 4-aminobutyrate aminotransferase, mitochondrial (500 aa).

The transit peptide at 1-28 (MAFLLITRRLACSSQKNLHLFIPGSRYI) directs the protein to the mitochondrion. C163 serves as a coordination point for [2Fe-2S] cluster. 164 to 165 (GS) serves as a coordination point for pyridoxal 5'-phosphate. C166 is a binding site for [2Fe-2S] cluster. Residue R220 coordinates substrate. K231 carries the N6-succinyllysine modification. Position 252 is an N6-acetyllysine; alternate (K252). Residue K252 is modified to N6-succinyllysine; alternate. K279 and K318 each carry N6-acetyllysine. K357 carries the N6-(pyridoxal phosphate)lysine modification. A pyridoxal 5'-phosphate-binding site is contributed by T381. Position 413 is an N6-acetyllysine; alternate (K413). Residue K413 is modified to N6-succinyllysine; alternate. 2 positions are modified to N6-acetyllysine: K452 and K470.

The protein belongs to the class-III pyridoxal-phosphate-dependent aminotransferase family. In terms of assembly, homodimer; disulfide-linked. The cofactor is pyridoxal 5'-phosphate. [2Fe-2S] cluster is required as a cofactor.

Its subcellular location is the mitochondrion matrix. It catalyses the reaction 4-aminobutanoate + 2-oxoglutarate = succinate semialdehyde + L-glutamate. The enzyme catalyses (S)-3-amino-2-methylpropanoate + 2-oxoglutarate = 2-methyl-3-oxopropanoate + L-glutamate. In terms of biological role, catalyzes the conversion of gamma-aminobutyrate and L-beta-aminoisobutyrate to succinate semialdehyde and methylmalonate semialdehyde, respectively. Can also convert delta-aminovalerate and beta-alanine. In Mus musculus (Mouse), this protein is 4-aminobutyrate aminotransferase, mitochondrial.